The sequence spans 198 residues: MIIDLIWIITSYVIGSIPFGVLFANIFCGIDPRTLGSGNVGATNITRICGRKLGFITLFFDVLKGFFPVVIATYLSESPFMYTMTGLAAIIGHLYSCFLHFKGGKAVATSIGVLIPIAFWQLLFAAILCTFFIWRSGFVSLGSLVLVTSLPIILFITGKFAYIPLSLIIMALIFWSHKQNIQRLIKGEEKVWKHSESI.

5 helical membrane-spanning segments follow: residues 2-22 (IIDL…FGVL), 53-73 (LGFI…VIAT), 79-99 (PFMY…SCFL), 113-133 (VLIP…TFFI), and 152-172 (IILF…IMAL).

The protein belongs to the PlsY family. In terms of assembly, probably interacts with PlsX.

It is found in the cell membrane. The enzyme catalyses an acyl phosphate + sn-glycerol 3-phosphate = a 1-acyl-sn-glycero-3-phosphate + phosphate. Its pathway is lipid metabolism; phospholipid metabolism. Catalyzes the transfer of an acyl group from acyl-phosphate (acyl-PO(4)) to glycerol-3-phosphate (G3P) to form lysophosphatidic acid (LPA). This enzyme utilizes acyl-phosphate as fatty acyl donor, but not acyl-CoA or acyl-ACP. The protein is Glycerol-3-phosphate acyltransferase of Lawsonia intracellularis (strain PHE/MN1-00).